Reading from the N-terminus, the 224-residue chain is Ribose-5-phosphate isomerase A (224 aa).

Substrate-binding positions include 26 to 29 (TGST), 82 to 85 (DGAD), and 95 to 98 (KGGG). E104 serves as the catalytic Proton acceptor. K122 contributes to the substrate binding site.

The protein belongs to the ribose 5-phosphate isomerase family. As to quaternary structure, homodimer.

The catalysed reaction is aldehydo-D-ribose 5-phosphate = D-ribulose 5-phosphate. The protein operates within carbohydrate degradation; pentose phosphate pathway; D-ribose 5-phosphate from D-ribulose 5-phosphate (non-oxidative stage): step 1/1. Functionally, catalyzes the reversible conversion of ribose-5-phosphate to ribulose 5-phosphate. The sequence is that of Ribose-5-phosphate isomerase A from Lactococcus lactis subsp. cremoris (strain SK11).